We begin with the raw amino-acid sequence, 100 residues long: Protein SAMBA (100 aa).

Residues 1-40 are disordered; sequence MNGASPAHSLVSTTAVAGGGGSSGAAAGLDDFHFPPDIPS.

In terms of assembly, interacts with CDC27B and CYCA2-3. Expressed in embryos, germinating seeds, hypocotyls and pollen grains.

Its function is as follows. Plays an important role in organ size control. Acts as negative regulator of the anaphase-promoting complex/cyclosome (APC/C). Regulates cell proliferation during early development by targeting CYCA2-3 for APC/C-mediated degradation. Required for mitosis I during pollen microspore development. This chain is Protein SAMBA, found in Arabidopsis thaliana (Mouse-ear cress).